The chain runs to 320 residues: MVDNNKTVDNNYKHTSVLLDEAVKGLNIRDNGIYIDGTFGRGGHSRLILSQLGPEGRLIAIDRDPEAIEAAKQITDPRFSIVHGPFSDLAHYVRDLDLVGRIDGILLDLGVSSPQLDDAERGFSFMRDGPLDMRMDPSRGLSAAEWLMKASADDIAWVLKTFGEERFAKRLAKAIVERNLTQPMTRTKELADLIANASPFRDKHKHPATRSFQAIRIYINSELEEIERALDGAHEVLAPEGRLSVISFHSLEDRIVKNFIRHHSRGPQVPAGLPLTEAQLRSMGGRTLKSVGKMMPGDAEIAENPRARSSVLRFAERIGE.

S-adenosyl-L-methionine contacts are provided by residues 42 to 44 (GGH), D62, F86, D108, and Q115.

Belongs to the methyltransferase superfamily. RsmH family.

The protein resides in the cytoplasm. The enzyme catalyses cytidine(1402) in 16S rRNA + S-adenosyl-L-methionine = N(4)-methylcytidine(1402) in 16S rRNA + S-adenosyl-L-homocysteine + H(+). Functionally, specifically methylates the N4 position of cytidine in position 1402 (C1402) of 16S rRNA. This chain is Ribosomal RNA small subunit methyltransferase H, found in Yersinia pseudotuberculosis serotype O:1b (strain IP 31758).